Reading from the N-terminus, the 190-residue chain is Probable gluconokinase (190 aa).

7–14 lines the ATP pocket; sequence GVSGSGKT.

Belongs to the gluconokinase GntK/GntV family.

The catalysed reaction is D-gluconate + ATP = 6-phospho-D-gluconate + ADP + H(+). Its pathway is carbohydrate acid metabolism; D-gluconate degradation. This is Probable gluconokinase (idnk) from Xenopus tropicalis (Western clawed frog).